The primary structure comprises 161 residues: Cyclic pyranopterin monophosphate synthase (161 aa).

Substrate is bound by residues 75 to 77 (MCH) and 114 to 115 (ME). Asp-129 is a catalytic residue.

The protein belongs to the MoaC family. Homohexamer; trimer of dimers.

The enzyme catalyses (8S)-3',8-cyclo-7,8-dihydroguanosine 5'-triphosphate = cyclic pyranopterin phosphate + diphosphate. It participates in cofactor biosynthesis; molybdopterin biosynthesis. Functionally, catalyzes the conversion of (8S)-3',8-cyclo-7,8-dihydroguanosine 5'-triphosphate to cyclic pyranopterin monophosphate (cPMP). The chain is Cyclic pyranopterin monophosphate synthase from Staphylococcus carnosus (strain TM300).